The chain runs to 230 residues: Androgen-dependent TFPI-regulating protein (230 aa).

Residues 1 to 7 (MTKTTTC) lie on the Cytoplasmic side of the membrane. Residues 8–28 (VYHFLVLNWYIFLNYHIPQIG) traverse the membrane as a helical segment. Topologically, residues 29 to 45 (RNEEKLREFHDGGRSKY) are extracellular. The helical transmembrane segment at 46-66 (LTLLNLLLQAIFFGVACLDDV) threads the bilayer. Over 67–85 (LKRVIGRKDIKFVTSFRDL) the chain is Cytoplasmic. Residues 86–106 (LFTTMAFPISTFVFLVFWTLF) form a helical membrane-spanning segment. The Extracellular segment spans residues 107-120 (HYDRSLVYPKGLDD). Residues 121–141 (FFPAWVNHAMHTSIFPFSLFE) traverse the membrane as a helical segment. The Cytoplasmic segment spans residues 142 to 154 (TILRPHNYPSKKL). Residues 155 to 175 (GLTLLGAFNFAYIIRILWRYV) form a helical membrane-spanning segment. The Extracellular segment spans residues 176–190 (QTGNWVYPVFDSLSP). Residues 191–211 (LGIIIFFSAAYILVAGIYLFG) traverse the membrane as a helical segment. Residues 212–230 (EKINHWKWGAIAKPQMKKN) lie on the Cytoplasmic side of the membrane.

Belongs to the AIG1 family.

It is found in the cell membrane. The catalysed reaction is 9-hexadecanoyloxy-octadecanoate + H2O = 9-hydroxy-octadecanoate + hexadecanoate + H(+). It catalyses the reaction 12-hexadecanoyloxy-octadecanoate + H2O = 12-hydroxyoctadecanoate + hexadecanoate + H(+). The enzyme catalyses 9-(9Z-hexadecenoyloxy)-octadecanoate + H2O = (9Z)-hexadecenoate + 9-hydroxy-octadecanoate + H(+). It carries out the reaction 12-(9Z-hexadecenoyloxy)-octadecanoate + H2O = 12-hydroxyoctadecanoate + (9Z)-hexadecenoate + H(+). The catalysed reaction is 13-(9Z-hexadecenoyloxy)-octadecanoate + H2O = 13-hydroxy-octadecanoate + (9Z)-hexadecenoate + H(+). It catalyses the reaction 9-octadecanoyloxy-octadecanoate + H2O = 9-hydroxy-octadecanoate + octadecanoate + H(+). The enzyme catalyses 12-octadecanoyloxy-octadecanoate + H2O = 12-hydroxyoctadecanoate + octadecanoate + H(+). It carries out the reaction 13-octadecanoyloxy-octadecanoate + H2O = 13-hydroxy-octadecanoate + octadecanoate + H(+). The catalysed reaction is 9-(9Z-octadecenoyloxy)-octadecanoate + H2O = 9-hydroxy-octadecanoate + (9Z)-octadecenoate + H(+). It catalyses the reaction 12-(9Z-octadecenoyloxy)-octadecanoate + H2O = 12-hydroxyoctadecanoate + (9Z)-octadecenoate + H(+). The enzyme catalyses 13-(9Z-octadecenoyloxy)-octadecanoate + H2O = 13-hydroxy-octadecanoate + (9Z)-octadecenoate + H(+). It carries out the reaction 5-(9Z-octadecenoyloxy)-octadecanoate + H2O = 5-hydroxy-octadecanoate + (9Z)-octadecenoate + H(+). Hydrolyzes bioactive fatty-acid esters of hydroxy-fatty acids (FAHFAs), but not other major classes of lipids. Shows a preference for FAHFAs with branching distal from the carboxylate head group of the lipids. Regulates the expression and the cell-associated anticoagulant activity of the inhibitor TFPI in endothelial cells (in vitro). In Mus musculus (Mouse), this protein is Androgen-dependent TFPI-regulating protein (Adtrp).